A 124-amino-acid chain; its full sequence is Ribulose bisphosphate carboxylase small subunit (124 aa).

It belongs to the RuBisCO small chain family. Heterohexadecamer of 8 large and 8 small subunits.

In terms of biological role, ruBisCO catalyzes two reactions: the carboxylation of D-ribulose 1,5-bisphosphate, the primary event in carbon dioxide fixation, as well as the oxidative fragmentation of the pentose substrate. Both reactions occur simultaneously and in competition at the same active site. Although the small subunit is not catalytic it is essential for maximal activity. The polypeptide is Ribulose bisphosphate carboxylase small subunit (Hydrogenophilus thermoluteolus (Pseudomonas hydrogenothermophila)).